Consider the following 328-residue polypeptide: Dolichyl-diphosphooligosaccharide--protein glycosyltransferase subunit MAGT1 (328 aa).

The N-terminal stretch at 1 to 22 is a signal peptide; sequence MLHKLLIVVFLVVCLHDMRLNG. Over 23 to 177 the chain is Extracellular; that stretch reads QKKKETLLSE…DVHIRVIRPP (155 aa). The 129-residue stretch at 40 to 168 folds into the Thioredoxin domain; sequence WVSKRAVVRL…LARWVADRTD (129 aa). Residue N64 is glycosylated (N-linked (GlcNAc...) asparagine). C80 and C83 are oxidised to a cystine. Residues 178 to 198 form a helical membrane-spanning segment; it reads NYAGPLMLGLLLAFIGSLAYL. Residues 199-202 lie on the Cytoplasmic side of the membrane; sequence RRNN. Residues 203 to 223 form a helical membrane-spanning segment; that stretch reads LEFLFNKNVWAFSALCFVLIM. At 224 to 257 the chain is on the extracellular side; the sequence is TSGQMWNHIRGPPYAHKNPNTGQVSYIHGSSQAQ. Residues 258-278 form a helical membrane-spanning segment; the sequence is FVAETHIVLLFNAAVTIGMVL. Residues 279–293 lie on the Cytoplasmic side of the membrane; it reads LHEAATSGLDIVKRK. A helical membrane pass occupies residues 294 to 314; the sequence is IMCVAGIGLVVLFFSWLLSVF. Over 315–328 the chain is Extracellular; sequence RAKYHGYPYSFLFG.

It belongs to the OST3/OST6 family. Accessory component of the STT3B-containing form of the oligosaccharyltransferase (OST) complex.

It is found in the cell membrane. The protein localises to the endoplasmic reticulum. The protein resides in the endoplasmic reticulum membrane. It functions in the pathway protein modification; protein glycosylation. In terms of biological role, accessory component of the STT3B-containing form of the N-oligosaccharyl transferase (OST) complex which catalyzes the transfer of a high mannose oligosaccharide from a lipid-linked oligosaccharide donor to an asparagine residue within an Asn-X-Ser/Thr consensus motif in nascent polypeptide chains. Involved in N-glycosylation of STT3B-dependent substrates. Specifically required for the glycosylation of a subset of acceptor sites that are near cysteine residues; in this function seems to act redundantly with TUSC3. In its oxidized form proposed to form transient mixed disulfides with a glycoprotein substrate to facilitate access of STT3B to the unmodified acceptor site. Also has oxidoreductase-independent functions in the STT3B-containing OST complex possibly involving substrate recognition. Could indirectly play a role in Mg(2+) transport. The polypeptide is Dolichyl-diphosphooligosaccharide--protein glycosyltransferase subunit MAGT1 (Danio rerio (Zebrafish)).